Reading from the N-terminus, the 353-residue chain is Divinyl chlorophyll a/b light-harvesting protein PcbG (353 aa).

Transmembrane regions (helical) follow at residues 28–48, 64–84, 90–110, 204–224, 244–264, and 308–328; these read FISSHIAHTGLICFGAGANTL, GLVVLPHLAGLGLGGISNGVF, LLVVAILHLILSGVYGGGGML, IMGGHAFLAFFMAAGGVFHIL, FVLSTSLAGAAYTAFVAALWC, and LTNVHFFIGFFYLQGHFFHGL.

The protein belongs to the PsbB/PsbC family. IsiA/Pcb subfamily. The antenna complex consists of divinyl chlorophylls (a and b) and divinyl chlorophyll a/b binding proteins and binds more divinyl chlorophyll b than does the antenna complex from high-light-adapted Prochlorococcus. Also forms complexes with PSI, consisting of a PSI trimer with surrounded by a PcbG ring (probably with 18 subunits). Is the only subunit found in this ring under iron-replete conditions. Requires divinyl chlorophyll a as cofactor. The cofactor is divinyl chlorophyll b.

Its subcellular location is the cellular thylakoid membrane. Functionally, the antenna complex functions as a light receptor, it captures and delivers excitation energy to photosystems I. The Prochlorales pcb genes are not related to higher plant LHCs. This chain is Divinyl chlorophyll a/b light-harvesting protein PcbG (pcbG), found in Prochlorococcus marinus (strain SARG / CCMP1375 / SS120).